We begin with the raw amino-acid sequence, 158 residues long: Ribosome maturation factor RimP (158 aa).

This sequence belongs to the RimP family.

The protein localises to the cytoplasm. Required for maturation of 30S ribosomal subunits. This is Ribosome maturation factor RimP from Pseudomonas syringae pv. tomato (strain ATCC BAA-871 / DC3000).